A 534-amino-acid polypeptide reads, in one-letter code: ATP-dependent RNA helicase DBP3 (534 aa).

Residues 1–96 are disordered; the sequence is MGSKRKHESG…VSSSSSGYTQ (96 aa). Residues 8 to 30 are compositionally biased toward basic and acidic residues; it reads ESGDVEVKKPKHDNEVKGKEKKE. Over residues 31–53 the composition is skewed to basic residues; that stretch reads KKEKKEKKEKKEKKEKKEKKEKK. The segment covering 54–63 has biased composition (basic and acidic residues); it reads EKKEKNEKKE. Positions 82–92 are enriched in low complexity; sequence STVSTVSSSSS. Residues 131-157 carry the Q motif motif; sequence LSFDHVQLQSKIAPIVTKFPKPTPIQS. The Helicase ATP-binding domain occupies 160–330; the sequence is WPYLLNGDDV…ATFMNKAVKV (171 aa). An ATP-binding site is contributed by 173–180; sequence AETGSGKT. The short motif at 278-281 is the DEAD box element; that stretch reads DEAD. The region spanning 359–504 is the Helicase C-terminal domain; that stretch reads RLLQLLRQYG…PVPDELLKFG (146 aa).

It belongs to the DEAD box helicase family. DDX5/DBP2 subfamily.

It localises to the nucleus. The protein resides in the nucleolus. It carries out the reaction ATP + H2O = ADP + phosphate + H(+). ATP-dependent RNA helicase required for 60S ribosomal subunit synthesis. Involved in efficient pre-rRNA processing, predominantly at site A3, which is necessary for the normal formation of 25S and 5.8S rRNAs. The sequence is that of ATP-dependent RNA helicase DBP3 (DBP3) from Meyerozyma guilliermondii (strain ATCC 6260 / CBS 566 / DSM 6381 / JCM 1539 / NBRC 10279 / NRRL Y-324) (Yeast).